The sequence spans 80 residues: UPF0346 protein LSEI_1394 (80 aa).

It belongs to the UPF0346 family.

The chain is UPF0346 protein LSEI_1394 from Lacticaseibacillus paracasei (strain ATCC 334 / BCRC 17002 / CCUG 31169 / CIP 107868 / KCTC 3260 / NRRL B-441) (Lactobacillus paracasei).